Here is a 505-residue protein sequence, read N- to C-terminus: Chromatin assembly factor 1 subunit FAS2 homolog (505 aa).

7 WD repeats span residues 11–50 (HEQQ…SDKK), 62–101 (SHSS…DGEA), 110–149 (FHHK…VQQK), 152–191 (GHLH…KSKN), 223–268 (FHDE…SRRD), 278–333 (GASK…PILI), and 337–378 (LHYA…LPYN). The tract at residues 479 to 505 (VTAPPVSTKNSASSKPTKKRITPIAIN) is disordered.

Belongs to the WD repeat HIR1 family. As to quaternary structure, component of the chromatin assembly factor 1 (CAF-1) complex, composed of FSM (FAS1), FAS2 and MSI1.

It localises to the nucleus. In terms of biological role, component of the chromatin assembly factor complex (CAF-1) involved in chromatin assembly following DNA replication and DNA repair. Required for several aspects of development, including apical meristem maintenance by regulating the durations of the S- and G2-phases of the cell cycle through its chromatin assembly activity. The chain is Chromatin assembly factor 1 subunit FAS2 homolog (FAS2) from Oryza sativa subsp. japonica (Rice).